We begin with the raw amino-acid sequence, 387 residues long: Pepsin A (387 aa).

The signal sequence occupies residues 1 to 16 (MKKLLLLLGLVALSEC). Positions 17–61 (LYKVPLVKKKSLRQNLIENGLLKDFLAKHNVNPASKYFPTEAATE) are cleaved as a propeptide — activation peptide. The 310-residue stretch at 75-384 (YFGTIGIGTP…DRGNNRVGLA (310 aa)) folds into the Peptidase A1 domain. Asp93 is an active-site residue. Residues Cys106 and Cys111 are joined by a disulfide bond. Phosphoserine is present on Ser129. The cysteines at positions 267 and 271 are disulfide-linked. The active site involves Asp276. A disulfide bridge links Cys310 with Cys343.

The protein belongs to the peptidase A1 family.

The protein localises to the secreted. The catalysed reaction is Preferential cleavage: hydrophobic, preferably aromatic, residues in P1 and P1' positions. Cleaves 1-Phe-|-Val-2, 4-Gln-|-His-5, 13-Glu-|-Ala-14, 14-Ala-|-Leu-15, 15-Leu-|-Tyr-16, 16-Tyr-|-Leu-17, 23-Gly-|-Phe-24, 24-Phe-|-Phe-25 and 25-Phe-|-Tyr-26 bonds in the B chain of insulin.. In terms of biological role, shows particularly broad specificity; although bonds involving phenylalanine and leucine are preferred, many others are also cleaved to some extent. The polypeptide is Pepsin A (PGA) (Suncus murinus (Asian house shrew)).